The primary structure comprises 535 residues: Glucose-6-phosphate isomerase (535 aa).

Residue Glu347 is the Proton donor of the active site. Active-site residues include His378 and Lys493.

Belongs to the GPI family.

The protein localises to the cytoplasm. It catalyses the reaction alpha-D-glucose 6-phosphate = beta-D-fructose 6-phosphate. The protein operates within carbohydrate biosynthesis; gluconeogenesis. It functions in the pathway carbohydrate degradation; glycolysis; D-glyceraldehyde 3-phosphate and glycerone phosphate from D-glucose: step 2/4. Its function is as follows. Catalyzes the reversible isomerization of glucose-6-phosphate to fructose-6-phosphate. This chain is Glucose-6-phosphate isomerase, found in Chlamydia felis (strain Fe/C-56) (Chlamydophila felis).